The sequence spans 192 residues: Ras-like protein 2 (192 aa).

Residue 12 to 19 (GGGGVGKS) coordinates GTP. The Effector region motif lies at 34–42 (YDPTIEDSY). A lipid anchor (S-palmitoyl cysteine) is attached at Cys-46. GTP contacts are provided by residues 59 to 63 (DTAGQ) and 118 to 121 (NKCD). 2 S-palmitoyl cysteine lipidation sites follow: Cys-120 and Cys-147. Position 189 is a cysteine methyl ester (Cys-189). Cys-189 carries S-farnesyl cysteine lipidation. The propeptide at 190-192 (CLM) is removed in mature form.

This sequence belongs to the small GTPase superfamily. Ras family. As to quaternary structure, interacts with hzg.

The protein resides in the cell membrane. It carries out the reaction GTP + H2O = GDP + phosphate + H(+). Its activity is regulated as follows. Alternates between an inactive form bound to GDP and an active form bound to GTP. Activated by a guanine nucleotide-exchange factor (GEF) and inactivated by a GTPase-activating protein (GAP). Its function is as follows. May be involved in endocytic processes and/or other transport pathways mediated by vesicle trafficking. May interact functionally with ROP protein. Ras proteins bind GDP/GTP and possess intrinsic GTPase activity. The polypeptide is Ras-like protein 2 (Ras64B) (Drosophila melanogaster (Fruit fly)).